Reading from the N-terminus, the 438-residue chain is Exosome complex component RRP45 (438 aa).

Position 65 is a phosphoserine (Ser65). Lys297 carries the N6-acetyllysine; alternate modification. Lys297 participates in a covalent cross-link: Glycyl lysine isopeptide (Lys-Gly) (interchain with G-Cter in SUMO1); alternate. Residue Lys297 forms a Glycyl lysine isopeptide (Lys-Gly) (interchain with G-Cter in SUMO2); alternate linkage. Ser306 and Ser346 each carry phosphoserine. Disordered stretches follow at residues 337-365 (AQIG…GGID) and 377-438 (TGEV…RTAN). Residues 349-364 (DLEDSEKEEEEEEGGI) show a composition bias toward acidic residues. A phosphoserine mark is found at Ser393 and Ser395. Residues 427-438 (QGKRKKKKRTAN) are compositionally biased toward basic residues.

It belongs to the RNase PH family. In terms of assembly, component of the RNA exosome core complex (Exo-9), composed of EXOSC1, EXOSC2, EXOSC3, EXOSC4, EXOSC5, EXOSC6, EXOSC7, EXOSC8 and EXOSC9; within the complex interacts with EXOSC3, EXOSC4, EXOSC5 and DIS3. The catalytically inactive RNA exosome core complex (Exo-9) associates with the catalytic subunit EXOSC10/RRP6. Exo-9 may associate with DIS3 to form the nucleolar exosome complex, or DIS3L to form the cytoplasmic exosome complex. Exo-9 is formed by a hexameric base ring consisting of the heterodimers EXOSC4-EXOSC9, EXOSC5-EXOSC8 and EXOSC6-EXOSC7, and a cap ring consisting of EXOSC1, EXOSC2 and EXOSC3. The RNA exosome complex associates with cofactors C1D/RRP47, MPHOSPH6/MPP6 and MTREX/MTR4. Interacts (via C-terminus region) with SETX (via N-terminus domain); the interaction enhances SETX sumoylation. Interacts with DIS3; the interaction is direct.

The protein resides in the cytoplasm. It is found in the nucleus. Its subcellular location is the nucleolus. The protein localises to the nucleoplasm. Its function is as follows. Non-catalytic component of the RNA exosome complex which has 3'-&gt;5' exoribonuclease activity and participates in a multitude of cellular RNA processing and degradation events. In the nucleus, the RNA exosome complex is involved in proper maturation of stable RNA species such as rRNA, snRNA and snoRNA, in the elimination of RNA processing by-products and non-coding 'pervasive' transcripts, such as antisense RNA species and promoter-upstream transcripts (PROMPTs), and of mRNAs with processing defects, thereby limiting or excluding their export to the cytoplasm. The RNA exosome may be involved in Ig class switch recombination (CSR) and/or Ig variable region somatic hypermutation (SHM) by targeting AICDA deamination activity to transcribed dsDNA substrates. In the cytoplasm, the RNA exosome complex is involved in general mRNA turnover and specifically degrades inherently unstable mRNAs containing AU-rich elements (AREs) within their 3' untranslated regions, and in RNA surveillance pathways, preventing translation of aberrant mRNAs. It seems to be involved in degradation of histone mRNA. The catalytic inactive RNA exosome core complex of 9 subunits (Exo-9) is proposed to play a pivotal role in the binding and presentation of RNA for ribonucleolysis, and to serve as a scaffold for the association with catalytic subunits and accessory proteins or complexes. EXOSC9 binds to ARE-containing RNAs. This is Exosome complex component RRP45 (Exosc9) from Mus musculus (Mouse).